The primary structure comprises 84 residues: Small ribosomal subunit protein bS16 (84 aa).

Belongs to the bacterial ribosomal protein bS16 family.

The chain is Small ribosomal subunit protein bS16 from Methylococcus capsulatus (strain ATCC 33009 / NCIMB 11132 / Bath).